A 719-amino-acid polypeptide reads, in one-letter code: MINSIIKTIDLGDGRTITLETGKLAKQADGAIVLRMNNTMILATVCVAKDTNPCVDFLPLQVEYKEKFSAFGRFPGGFTKREGRASDYEILTCRLIDRTLRPLFPRDYHSEVFVNIILFSSDGEDIPDALAGLAASAALSVSTIPFNGPISEVRVARIDGKFKINPTFGELAKADMDIMVGATADNIMMVEGEMNEVSEEEMLEAIKAAHEAIKPQCKAQIELARIVGTTIKNTYSHEVNDEELRSDIKTKLYDKVYAVAKSGQCKNKRIEAFQTIIEEYKKQFKEKELSEEKIFLIKRYYYEIEKEVMRRCILDENIRIDGRKTTEIRPIWSEVNPITGPHGSAIFTRGETQALATVTLGTKLNEKIIDDVLINDKERFLLHYNFPPFATGEARAQRGIGRREIGHGNLAHRALKPIIPNNYPYVIRVVSDILESNGSSSMATVCAGTLSLMDAGVQIKRPVSGIAMGLIFEKEGSKYAILSDILGDEDHLGDMDFKVAGTKKGITATQMDIKIDGLSYEVLERALSQAKQGREYILDKMLETIPEPRTDLKPHTPKIEIIIIPKEFIGSVIGPGGKIIQRLQEETGTTITIEEIEKMGRIEIFGDNKKSIDAALTRIKGIVSVPEVGEIYEGKIRSIMPYGAFIEFLPGKEGLLHISEISWKHLESIEEAGLNEGDFIKIKLVDIDSKTGKFKLSHKILLPHSEKYTAIRREQHEKI.

Asp490 and Asp496 together coordinate Mg(2+). In terms of domain architecture, KH spans 557 to 619; that stretch reads PKIEIIIIPK…KSIDAALTRI (63 aa). In terms of domain architecture, S1 motif spans 629–699; sequence GEIYEGKIRS…KTGKFKLSHK (71 aa).

Belongs to the polyribonucleotide nucleotidyltransferase family. Mg(2+) is required as a cofactor.

The protein resides in the cytoplasm. The catalysed reaction is RNA(n+1) + phosphate = RNA(n) + a ribonucleoside 5'-diphosphate. In terms of biological role, involved in mRNA degradation. Catalyzes the phosphorolysis of single-stranded polyribonucleotides processively in the 3'- to 5'-direction. The sequence is that of Polyribonucleotide nucleotidyltransferase from Azobacteroides pseudotrichonymphae genomovar. CFP2.